Here is a 401-residue protein sequence, read N- to C-terminus: Putative TRAP transporter large permease protein HI_0050 (401 aa).

Transmembrane regions (helical) follow at residues 31–51 (FPLM…HGGI), 70–90 (LGYV…SAVA), 115–135 (GLIC…PMII), 144–164 (ITKL…GLWV), 193–213 (AFWP…GIFT), 217–237 (AGVV…GLTF), 253–273 (MVMF…VAQI), 290–310 (ILMF…DLIP), 330–350 (IAYF…TPPV), 353–373 (VLYV…KGIA), and 375–395 (FLFV…IVIV).

The protein belongs to the TRAP transporter large permease family.

The protein resides in the cell inner membrane. The sequence is that of Putative TRAP transporter large permease protein HI_0050 from Haemophilus influenzae (strain ATCC 51907 / DSM 11121 / KW20 / Rd).